The sequence spans 156 residues: Small ribosomal subunit protein uS7 (156 aa).

It belongs to the universal ribosomal protein uS7 family. In terms of assembly, part of the 30S ribosomal subunit. Contacts proteins S9 and S11.

Functionally, one of the primary rRNA binding proteins, it binds directly to 16S rRNA where it nucleates assembly of the head domain of the 30S subunit. Is located at the subunit interface close to the decoding center, probably blocks exit of the E-site tRNA. This is Small ribosomal subunit protein uS7 from Streptococcus pyogenes serotype M1.